The chain runs to 756 residues: 5-methyltetrahydropteroyltriglutamate--homocysteine methyltransferase (756 aa).

Residues 16-19 and Lys-112 each bind 5-methyltetrahydropteroyltri-L-glutamate; that span reads RELK. L-homocysteine contacts are provided by residues 432 to 434 and Glu-485; that span reads IGS. Residues 432–434 and Glu-485 each bind L-methionine; that span reads IGS. 5-methyltetrahydropteroyltri-L-glutamate-binding positions include 516 to 517 and Trp-562; that span reads RC. Asp-600 serves as a coordination point for L-homocysteine. L-methionine is bound at residue Asp-600. Glu-606 contacts 5-methyltetrahydropteroyltri-L-glutamate. His-642, Cys-644, and Glu-666 together coordinate Zn(2+). His-695 (proton donor) is an active-site residue. Cys-727 is a binding site for Zn(2+).

The protein belongs to the vitamin-B12 independent methionine synthase family. Zn(2+) serves as cofactor.

The enzyme catalyses 5-methyltetrahydropteroyltri-L-glutamate + L-homocysteine = tetrahydropteroyltri-L-glutamate + L-methionine. It functions in the pathway amino-acid biosynthesis; L-methionine biosynthesis via de novo pathway; L-methionine from L-homocysteine (MetE route): step 1/1. Its function is as follows. Catalyzes the transfer of a methyl group from 5-methyltetrahydrofolate to homocysteine resulting in methionine formation. In Haemophilus influenzae (strain PittEE), this protein is 5-methyltetrahydropteroyltriglutamate--homocysteine methyltransferase.